Consider the following 37-residue polypeptide: Large ribosomal subunit protein bL36 (37 aa).

This sequence belongs to the bacterial ribosomal protein bL36 family.

This Aliarcobacter butzleri (strain RM4018) (Arcobacter butzleri) protein is Large ribosomal subunit protein bL36.